Here is a 702-residue protein sequence, read N- to C-terminus: MAGARRGWRLAPVRRGVCGPRARPLMRPLWLLFAVSFFGWTGALDGSGGTTRAMDEEIVSEKQAEESHRQDSANLLIFILLLTLTILTIWLFKHRRARFLHETGLAMIYGLLVGLVLRYGIHVPSDVNNVTLSCEVQSSPTTLLVNVSGKFYEYTLKGEISSHELNNVQDNEMLRKVTFDPEVFFNILLPPIIFYAGYSLKRRHFFRNLGSILAYAFLGTAISCFVIGSIMYGCVTLMKVTGQLAGDFYFTDCLLFGAIVSATDPVTVLAIFHELQVDVELYALLFGESVLNDAVAIVLSSSIVAYQPAGDNSHTFDVTAMFKSIGIFLGIFSGSFAMGAATGVVTALVTKFTKLREFQLLETGLFFLMSWSTFLLAEAWGFTGVVAVLFCGITQAHYTYNNLSTESQHRTKQLFELLNFLAENFIFSYMGLTLFTFQNHVFNPTFVVGAFIAIFLGRAANIYPLSLLLNLGRRSKIGSNFQHMMMFAGLRGAMAFALAIRDTATYARQMMFSTTLLIVFFTVWVFGGGTTAMLSCLHIRVGVDSDQEHLGVPDNERRTTKAESAWLFRMWYNFDHNYLKPLLTHSGPPLTTTLPACCGPIARCLTSPQAYENQEQLKDDDSDLILNDGDISLTYGDSTVNTESATASAPRRFMGNSSEDALDRELTFGDHELVIRGTRLVLPMDDSEPALNSLDDTRHSPA.

A run of 12 helical transmembrane segments spans residues serine 72–phenylalanine 92, glycine 104–proline 124, valine 177–glycine 197, isoleucine 212–tyrosine 232, cysteine 253–histidine 273, valine 279–leucine 299, isoleucine 325–valine 345, threonine 373–isoleucine 393, phenylalanine 415–phenylalanine 435, phenylalanine 437–glycine 457, asparagine 480–isoleucine 500, and leucine 516–cysteine 536.

The protein belongs to the monovalent cation:proton antiporter 1 (CPA1) transporter (TC 2.A.36) family. As to quaternary structure, homodimer. Interacts with RACK1; regulates the distribution of SLC9A6 between endosomes and the plasma membrane. Post-translationally, ubiquitinated (in vitro). In terms of processing, glycosylated.

It is found in the endosome membrane. Its subcellular location is the recycling endosome membrane. The protein resides in the early endosome membrane. The protein localises to the late endosome membrane. It localises to the cell membrane. The catalysed reaction is Na(+)(in) + H(+)(out) = Na(+)(out) + H(+)(in). It catalyses the reaction K(+)(in) + H(+)(out) = K(+)(out) + H(+)(in). Endosomal Na(+), K(+)/H(+) antiporter. Mediates the electroneutral exchange of endosomal luminal H(+) for a cytosolic Na(+) or K(+). By facilitating proton efflux, SLC9A6 counteracts the acidity generated by vacuolar (V)-ATPase, thereby limiting luminal acidification. Responsible for alkalizing and maintaining the endosomal pH, and consequently in, e.g., endosome maturation and trafficking of recycling endosomal cargo. Plays a critical role during neurodevelopment by regulating synaptic development and plasticity. Implicated in the maintenance of cell polarity in a manner that is dependent on its ability to modulate intravesicular pH. Regulates intracelular pH in some specialized cells, osteoclasts and stereocilia where this transporter localizes to the plasma membrane. The protein is Sodium/hydrogen exchanger 6 (Slc9a6) of Mus musculus (Mouse).